The chain runs to 699 residues: Elongation factor G (699 aa).

The region spanning 8-283 (EQIRNIGICA…AIVDFLPSPI (276 aa)) is the tr-type G domain. Residues 17-24 (AHIDAGKT), 81-85 (DTPGH), and 135-138 (NKMD) contribute to the GTP site.

The protein belongs to the TRAFAC class translation factor GTPase superfamily. Classic translation factor GTPase family. EF-G/EF-2 subfamily.

Its subcellular location is the cytoplasm. Functionally, catalyzes the GTP-dependent ribosomal translocation step during translation elongation. During this step, the ribosome changes from the pre-translocational (PRE) to the post-translocational (POST) state as the newly formed A-site-bound peptidyl-tRNA and P-site-bound deacylated tRNA move to the P and E sites, respectively. Catalyzes the coordinated movement of the two tRNA molecules, the mRNA and conformational changes in the ribosome. This Rickettsia prowazekii (strain Madrid E) protein is Elongation factor G (fusA).